A 346-amino-acid chain; its full sequence is Probable WRKY transcription factor 54 (346 aa).

A disordered region spans residues 109–130 (PVSCNGGDSGESKKKRLGVGKG). Residues 121–130 (KKKRLGVGKG) are compositionally biased toward basic residues. The WRKY DNA-binding region spans 146 to 214 (VEAKSSEDRY…YIGYHTCTAN (69 aa)). The span at 267–282 (VKEEQNNNGDQSKDYY) shows a compositional bias: basic and acidic residues. The disordered stretch occupies residues 267 to 286 (VKEEQNNNGDQSKDYYEGSS).

This sequence belongs to the WRKY group III family. Interacts with WRKY30. Binds to BZR2/BES1 to cooperatively regulate the expression of target genes. Interacts with ASK7/BIN2. Phosphorylated and destabilized by ASK7/BIN2. As to expression, expressed in leaves.

Its subcellular location is the nucleus. Functionally, transcription factor. Interacts specifically with the W box (5'-(T)TGAC[CT]-3'), a frequently occurring elicitor-responsive cis-acting element. Together with WRKY70, negative regulator of developmental senescence, probably via the regulation of several senescence-associated markers genes. Positive regulator of EDS1-dependent defense against E.amylovora. In collaboration with WRKY70, prevents stomatal closure and, consequently, osmotic stress tolerance. Together with WRKY46 and WRKY70, promotes brassinosteroid (BR)-regulated plant growth but prevent drought response by modulating gene expression. Negative regulator of SA biosynthesis. Prevents defense response to the necrotrophic pathogens P.carotovorum and B.cinerea, but promotes defense against biotrophic/hemibiotrophic pathogens P.syringae pv. tomato (Pst) DC3000, probably by regulating negatively the jasmonic acid (JA)/ethylene (ET) and positively the salicylic acid (SA) signaling pathways. This is Probable WRKY transcription factor 54 from Arabidopsis thaliana (Mouse-ear cress).